The sequence spans 2038 residues: Homeotic protein female sterile (2038 aa).

Residues 34–140 (RNTNQLQYLI…KVFLQKIESM (107 aa)) enclose the Bromo 1 domain. The segment at 145–284 (LELEPVTAKG…TTAMAGGVGG (140 aa)) is disordered. Low complexity-rich tracts occupy residues 177 to 209 (GSGTSSAAVTSGPGSGSTKVSVAASSAQQSGLQ) and 268 to 279 (PGSTNTTTTAMA). Residues 330 to 350 (AAVAAAAAAAAAAAAAAGGAA) form a helical membrane-spanning segment. The tract at residues 396 to 432 (KGVKRKADTTTPTANAFESPYTQMDSKSAKIATRRES) is disordered. The segment covering 404-421 (TTTPTANAFESPYTQMDS) has biased composition (polar residues). Residues 451 to 471 (VSGVPGLGGLVAGGVAGVAVA) traverse the membrane as a helical segment. Serine 452 is modified (phosphoserine). Positions 475 to 584 (EKLSDALKSC…DVFEMRYANI (110 aa)) constitute a Bromo 2 domain. Disordered stretches follow at residues 590 to 655 (ANAA…ERSA) and 677 to 735 (EASA…SVPG). Residues 593–619 (AHHHGHGHGHGHGHGHGHGHGHGHGHG) show a composition bias toward basic residues. A compositionally biased stretch (acidic residues) spans 636–649 (SSEDSSDTENESNS). The segment covering 681–694 (KKKAKKKLKEKKKS) has biased composition (basic residues). Positions 711 to 735 (TGGGANAGGAGGPGSGGHGSVSVPG) are enriched in gly residues. The next 3 helical transmembrane spans lie at 750 to 770 (LNALLGGSLVGHGGAAVAGGV), 790 to 810 (MAGGGAAAGAGFGAGVTAAGA), and 816 to 830 (AGTLAGALAAGAAAG). 10 disordered regions span residues 832–858 (GGTTAGSGSSKGAKSKGGRGAKGSGAG), 891–956 (AGAA…SYDE), 1016–1139 (CLRK…GGNL), 1217–1260 (AVSA…ATVA), 1384–1416 (QPAGPQQQQQQQQQQPFGHQQQQQQQQQQQQQQ), 1502–1530 (MQQMQLQQQHHQQQQQQTHQQQQQHQQQH), 1580–1616 (IESMMPSPPDKQQLQQHQKVLPPQQSPSDMKLHPNAA), 1645–1728 (WSSL…VAQA), 1745–1918 (AAAA…SGAI), and 1957–2023 (MESG…GQID). Residues 874-894 (GAAGAAAGAGSVGGVGGAGAA) traverse the membrane as a helical segment. A compositionally biased stretch (gly residues) spans 910–927 (GAGGGVGGANASAGGAGA). The NET domain maps to 942-1024 (DSEEEDTAKP…SCLRKKTHKK (83 aa)). Position 943 is a phosphoserine (serine 943). Residues 1017–1027 (LRKKTHKKPSG) are compositionally biased toward basic residues. Basic and acidic residues predominate over residues 1028–1046 (KSKDEQMAEKKQELEKRLQ). A compositionally biased stretch (low complexity) spans 1079 to 1100 (SSSSSSSDSSSSSSSDSSSSDS). 2 stretches are compositionally biased toward polar residues: residues 1121-1131 (SNGSNVNNPSI) and 1222-1232 (TGQQHNKNGPN). The span at 1645–1665 (WSSLASANSPQSHTSSSSSSS) shows a compositional bias: low complexity. The residue at position 1653 (serine 1653) is a Phosphoserine. Residues 1680–1708 (KAKERDRLKLLEAAEKEKKNQKEAAEKEQ) are compositionally biased toward basic and acidic residues. Low complexity-rich tracts occupy residues 1716–1728 (SSSSLTSAAVAQA) and 1745–1760 (AAAAALASSASNPSGG). The helical transmembrane segment at 1731 to 1751 (IAAATAAAAVTLGAAAAAALA) threads the bilayer. Over residues 1776–1791 (GDRDRDRDRERERERS) the composition is skewed to basic and acidic residues. Low complexity predominate over residues 1800–1813 (NGNNSSNSANSNGP). 2 stretches are compositionally biased toward gly residues: residues 1814–1828 (GSAGSGGSGGGGGSG) and 1835–1856 (PNSGGGGTANSNSGGGGGGGGP). Over residues 1857–1884 (ALLNAGSNSNSGVGSGGAASSNSNSSVG) the composition is skewed to low complexity. Residues 1885–1915 (GIVGSGGPGSNSQGSSGGGGGGPASGGGMGS) show a composition bias toward gly residues. The helical transmembrane segment at 1939–1959 (VAAAVAAQAILAASPLGAMES) threads the bilayer. Phosphoserine is present on residues serine 1980 and serine 1988. Over residues 1986–1997 (QSSPAQQSPQDR) the composition is skewed to low complexity. The segment covering 1998-2017 (AAAKRAEQRRAEQERRRREA) has biased composition (basic and acidic residues).

Its subcellular location is the membrane. In terms of biological role, required maternally for proper expression of other homeotic genes involved in pattern formation, such as Ubx. The sequence is that of Homeotic protein female sterile (fs(1)h) from Drosophila melanogaster (Fruit fly).